Here is a 189-residue protein sequence, read N- to C-terminus: Large ribosomal subunit protein uL6 (189 aa).

It belongs to the universal ribosomal protein uL6 family. In terms of assembly, part of the 50S ribosomal subunit.

This protein binds to the 23S rRNA, and is important in its secondary structure. It is located near the subunit interface in the base of the L7/L12 stalk, and near the tRNA binding site of the peptidyltransferase center. The polypeptide is Large ribosomal subunit protein uL6 (Phocaeicola vulgatus (strain ATCC 8482 / DSM 1447 / JCM 5826 / CCUG 4940 / NBRC 14291 / NCTC 11154) (Bacteroides vulgatus)).